A 397-amino-acid chain; its full sequence is Staphyloferrin A transporter (397 aa).

A run of 12 helical transmembrane segments spans residues 10 to 30, 39 to 59, 67 to 87, 93 to 110, 137 to 157, 162 to 182, 213 to 233, 245 to 265, 271 to 292, 296 to 313, 333 to 353, and 358 to 378; these read FLLFLGNWIGQIGLNWFVLTT, IVNFCRLVPILLLSVWAGAIA, LLRITISSSFLVTAILCVLTY, PISVIIIYATLRGILSAV, FIINICRSIGPAIAGVILAVY, TFLAQAICYFIAVLLCLPLHF, IFITSLLIMATGFSYTTLLPV, IFGIAMTMCAIGGIIATLVLP, IGMVNMYYLSSFLFGIALLGVV, IVIMFICITLIGLFSQWA, VLSIIMMDRGMIPLGSLLMSI, and FGIVRTFSIMGISTICITMVF.

This sequence belongs to the major facilitator superfamily.

The protein localises to the cell membrane. Involved in staphyloferrin A secretion. The polypeptide is Staphyloferrin A transporter (Staphylococcus aureus (strain NCTC 8325 / PS 47)).